Reading from the N-terminus, the 376-residue chain is Protein RecA (376 aa).

Position 78 to 85 (Gly-78 to Thr-85) interacts with ATP. The tract at residues Pro-355–Asp-376 is disordered. Over residues Asp-363–Asp-376 the composition is skewed to acidic residues.

It belongs to the RecA family.

The protein localises to the cytoplasm. Functionally, can catalyze the hydrolysis of ATP in the presence of single-stranded DNA, the ATP-dependent uptake of single-stranded DNA by duplex DNA, and the ATP-dependent hybridization of homologous single-stranded DNAs. It interacts with LexA causing its activation and leading to its autocatalytic cleavage. This Corynebacterium glutamicum (strain R) protein is Protein RecA.